Reading from the N-terminus, the 189-residue chain is Small ribosomal subunit protein uS5 (189 aa).

The 64-residue stretch at 22-85 (FVDKLVAINR…EAAKRELIFV (64 aa)) folds into the S5 DRBM domain.

It belongs to the universal ribosomal protein uS5 family. Part of the 30S ribosomal subunit. Contacts proteins S4 and S8.

Functionally, with S4 and S12 plays an important role in translational accuracy. Its function is as follows. Located at the back of the 30S subunit body where it stabilizes the conformation of the head with respect to the body. The protein is Small ribosomal subunit protein uS5 of Rhizobium etli (strain CIAT 652).